The chain runs to 236 residues: MLSGSAQLKLLQLVSPTLPVGAYNYSEGLEWLIERGNITNADTLGAWITQELCRGSITVDTAIMVRAHRLAGQMPKTDILPSPTLKHLSYWNQWLTATRESRELREQSLQMGGSLRKLLLDLEPTVQSWFEPIPPTEPCNYAIAFGLGAAFWGIDLHQSGLGYLHSWANNLISAGLRLIPLGQTAGQKLLLHLTPTILHQWQQILLLGDDDLYSCSWGLALASMGHESQYTRLFRS.

The protein belongs to the UreF family. As to quaternary structure, ureD, UreF and UreG form a complex that acts as a GTP-hydrolysis-dependent molecular chaperone, activating the urease apoprotein by helping to assemble the nickel containing metallocenter of UreC. The UreE protein probably delivers the nickel.

Its subcellular location is the cytoplasm. Required for maturation of urease via the functional incorporation of the urease nickel metallocenter. This is Urease accessory protein UreF from Synechocystis sp. (strain ATCC 27184 / PCC 6803 / Kazusa).